We begin with the raw amino-acid sequence, 1736 residues long: MSLEFGSVALQTQNEDEEFDKEDFEREKELQQLLTDLPHDMLDDELSSPERHDSDCSMDGRAAEPHPSEHLERKWIERDILPKPHSMNCGNGWEENRSKTEDQHLGYHPGEGGDEGGSGYSPPGKREQADLYRLPEDFRPYTGGSKQAASVITFSDPQRDNFQQFGLSRGPSCGALEPYKAVYKPYRNSSVQKNSSPAQEVAASDMFEGLQQQFLGANETDSAENIHIIQLQVLNKAKERQLDSLVEKLKDSERQVRYLSHQLLIVQDEKDGLALSLRESQQLFQNGKEREMQLEAQIAALEAQVEAFRVSEEKLTKKLRTTEITLESLKQQLVELHHSESLQRAREHHESIVASLTQKHEEQVSSLQKNLDATITALQEQESICTRLKDHVQQLERNQEAVRLEKTELINRLTRSLEDSQKQCAHLLQSGSVQEVAQLQLQLQQAQKAHVLSESMNKALQEELTELKDEISLYESAAELGVLPGDSEGDLSIELTESCVDLGIKKVNWKQSKANRVTQQESPDEDPSKDELILKLKTQVQRLLTSNSVKRHLVSQLQSDLRECRETMEAFQQSKDGDSGMETKTDTSEKTTKQLWLESSEAINREDILQLKNEVQVLQKQNQELKEAEEKLRSTNQDLCNQMRQMVQEFDHDKQEAVARCERTYQQHHEAMKAQIRESLLAKHAVEKQHLLEVYEGTQSQLRSDLDKMNKEMAAVQECYLEVCREKDGLESTLRKTMEKAQEQKRQLLEAREEYVRKLKLELEEKYQETLKTERQSWLQEQAAGATQQAEKESRQKLIQQLEKEWQSKLDDSLAAWRKTTSDRGSQTEQVACPAAVSKAEAAAVLAEEQARQVQQEKELATKEALRKPEVELELKYCEIIAQKVETAVQNARSRWIQELPMLAEYKALLRAQQQEWAKQQELAVAHRLSLALSEAKEKWKSELENMKPNVMSVKELEEKVHSLQKELELKDEEVPVIVRAEVAKARTEWNKEKQEEIHKIQEQNEEDYRQFLEDHRNKINEVLAAAKEDFVKQKAELLLQKETEFQACLDQSRKEWTLQEAQQTQVEIRQYEEDTLTVLAYLLKDTQLEYGGDSQDKQLLEAMSACSSKWISVQYFEKVKACIQKALHDMLSLLTDSVASEQEKRKVVKSSADTVSWTSSEGDSAVPVPLPDSTSVRCAQSSAWLKAEAETDKKICEIKGLRCGHCFQELEKEKQECQDLRRKLEKCRRHLQHLERTHRAAVEKLGEENSRVVEELIEENHDMKNKLEALRALCRTPPRSLSAGAAESAGPSCSRQALEELRGQYIKAVRKIKRDMLRYIQESKERAAEMVKAEVLRERQETARKMRNYYLSCLQQILQDNGKEEGAEKKIMSAASKLATMAELLGTIAESDCRVRCAQAGRSVALPLASEMLTGTERSERSGVNHNIPHYVESKPNSGKTLPRSVCEQLPGRKAAPRSQRRLEESKHREMRPMASTALPSDCRCGDASCRHSGVLAKDVAPEFVPCQGEGGFDLHEKRDALGAGSEPLLYSAAHSFLGGAEKNSSPRCISESRHTTLRSPSEMPRLKALMCGSPTETDSIASEKSQGVGSQDSPVKDGVGPSSSPAWPSDSTLPCGSPAVLFLGDGSQRTQEMLGDSVQWKQFSATSCHPDAQKSNMVCRSSHTLDLPKETLHSQQGKMGATLGHPSPQSTDMLKTDFKRLSGTGPSSLCQKPLIKLTAPMPSQQDSGFDSPLE.

Positions Met-1–Gly-60 are interaction with PLK4. The interval Met-1–Glu-127 is disordered. Basic and acidic residues-rich tracts occupy residues Arg-61 to Pro-82 and Glu-94 to Leu-105. Coiled coils occupy residues Ile-228–Gly-481, His-552–Asp-651, Leu-692–Gln-776, Ala-835–Lys-868, Asn-950–Asp-1075, and Gly-1205–Arg-1315. The tract at residues Phe-571–Thr-592 is disordered. Residues Lys-575–Thr-592 show a composition bias toward basic and acidic residues. Thr-1277 bears the Phosphothreonine mark. 4 disordered regions span residues Gly-1416 to Ala-1479, Glu-1543 to Pro-1562, Gly-1574 to Thr-1614, and Gln-1677 to Glu-1736. The span at Arg-1462–Arg-1473 shows a compositional bias: basic and acidic residues. Polar residues-rich tracts occupy residues Pro-1576 to Ser-1595 and Pro-1603 to Thr-1614. Lys-1714 is subject to N6-acetyllysine.

The protein belongs to the CEP152 family. In terms of assembly, interacts (via N-terminus) with PLK4; the interaction is mutally exclusive with a PLK4:CEP192 interaction. Interacts (via C-terminus) with CPAP (via-N-terminus). Interacts with CINP. Interacts with CDK5RAP2, WDR62, CEP63 and CEP131. CEP63, CDK5RAP2, CEP152, WDR62 are proposed to form a stepwise assembled complex at the centrosome forming a ring near parental centrioles. Interacts with DEUP1; this interaction recruits CEP152 to the deuterosome. The interactions with CEP63 and DEUP1 are mutually exclusive. Interacts with CCDC66.

The protein resides in the cytoplasm. Its subcellular location is the cytoskeleton. It localises to the microtubule organizing center. The protein localises to the centrosome. It is found in the centriole. In terms of biological role, necessary for centrosome duplication; the function also seems to involve CEP63, CDK5RAP2 and WDR62 through a stepwise assembled complex at the centrosome that recruits CDK2 required for centriole duplication. Acts as a molecular scaffold facilitating the interaction of PLK4 and CPAP, 2 molecules involved in centriole formation. Proposed to snatch PLK4 away from PLK4:CEP92 complexes in early G1 daughter centriole and to reposition PLK4 at the outer boundary of a newly forming CEP152 ring structure. Also plays a key role in deuterosome-mediated centriole amplification in multiciliated that can generate more than 100 centrioles. Overexpression of cep152 can drive amplification of centrioles. This chain is Centrosomal protein of 152 kDa (Cep152), found in Mus musculus (Mouse).